We begin with the raw amino-acid sequence, 130 residues long: Small ribosomal subunit protein uS8 (130 aa).

It belongs to the universal ribosomal protein uS8 family. As to quaternary structure, part of the 30S ribosomal subunit.

Its function is as follows. One of the primary rRNA binding proteins, it binds directly to 16S rRNA central domain where it helps coordinate assembly of the platform of the 30S subunit. This is Small ribosomal subunit protein uS8 from Methanosphaera stadtmanae (strain ATCC 43021 / DSM 3091 / JCM 11832 / MCB-3).